A 326-amino-acid chain; its full sequence is N-acetyl-gamma-glutamyl-phosphate reductase (326 aa).

Residue Cys-155 is part of the active site.

Belongs to the NAGSA dehydrogenase family. Type 1 subfamily.

It is found in the cytoplasm. The enzyme catalyses N-acetyl-L-glutamate 5-semialdehyde + phosphate + NADP(+) = N-acetyl-L-glutamyl 5-phosphate + NADPH + H(+). The protein operates within amino-acid biosynthesis; L-arginine biosynthesis; N(2)-acetyl-L-ornithine from L-glutamate: step 3/4. Its function is as follows. Catalyzes the NADPH-dependent reduction of N-acetyl-5-glutamyl phosphate to yield N-acetyl-L-glutamate 5-semialdehyde. The polypeptide is N-acetyl-gamma-glutamyl-phosphate reductase (Shewanella denitrificans (strain OS217 / ATCC BAA-1090 / DSM 15013)).